We begin with the raw amino-acid sequence, 659 residues long: Nicastrin (659 aa).

Positions 1–22 (MKIKNYFIIVFIIIVLSTDVIS) are cleaved as a signal peptide. The Extracellular portion of the chain corresponds to 23-627 (SQSSIEDKMY…LFQVGSYANE (605 aa)). Asn94, Asn172, Asn305, Asn389, Asn451, Asn475, Asn550, Asn553, and Asn600 each carry an N-linked (GlcNAc...) asparagine glycan. A helical membrane pass occupies residues 628–648 (IWFLVSGLIELLLSVGIIFYI). Residues 649 to 659 (KKYLSKRYKLL) are Cytoplasmic-facing.

This sequence belongs to the nicastrin family. In terms of assembly, homodimer. Component of the gamma-secretase complex, a complex composed of a presenilin homodimer, nicastrin, aph1 and pen2.

The protein resides in the membrane. Essential subunit of the gamma-secretase complex, an endoprotease complex that catalyzes the intramembrane cleavage of integral membrane proteins such as Notch receptors and APP (amyloid-beta precursor protein). It probably represents a stabilizing cofactor required for the assembly of the gamma-secretase complex. The polypeptide is Nicastrin (ncstn) (Dictyostelium discoideum (Social amoeba)).